We begin with the raw amino-acid sequence, 669 residues long: Trissin receptor (669 aa).

Positions 1–15 are enriched in polar residues; the sequence is MIMTMMQTVRAWQQE. The segment at 1 to 90 is disordered; it reads MIMTMMQTVR…PTGQQPPRLP (90 aa). Residues 1–184 are Extracellular-facing; sequence MIMTMMQTVR…EYIFDRTDVR (184 aa). Residues 55-74 are compositionally biased toward low complexity; the sequence is NQNNGSPNSSPNQSTSAFRQ. N-linked (GlcNAc...) asparagine glycosylation is present at Asn-66. Over residues 79–89 the composition is skewed to pro residues; that stretch reads HPPTGQQPPRL. 2 N-linked (GlcNAc...) asparagine glycosylation sites follow: Asn-120 and Asn-130. A helical transmembrane segment spans residues 185 to 205; that stretch reads IIFITLYTLVFCCCFFGNLLV. Residues 206–217 lie on the Cytoplasmic side of the membrane; that stretch reads ILVVTLSRRLRS. The chain crosses the membrane as a helical span at residues 218-238; sequence ITNFFLANLAFADFCVGLFCV. The Extracellular segment spans residues 239–269; sequence MQNLSIYLIESWVFGEFLCRMYQFVHSLSYT. Asn-241 carries an N-linked (GlcNAc...) asparagine glycan. A disulfide bridge links Cys-257 with Cys-340. Residues 270–290 traverse the membrane as a helical segment; that stretch reads ASIFILVVICMERYFAIVHPI. Residues 291-302 lie on the Cytoplasmic side of the membrane; the sequence is TCKQILTAARLR. Residues 303–323 form a helical membrane-spanning segment; sequence MVIVTVWITSAVYSTPKFVFS. Residues 324 to 350 lie on the Extracellular side of the membrane; it reads KTIKNIHTQDGQEEEICVLDREMFNSK. Residues 351–371 traverse the membrane as a helical segment; sequence LLDMINFVLLYVMPLLVMTVL. The Cytoplasmic portion of the chain corresponds to 372 to 552; sequence YSKIAIALWR…SSNVLRARRG (181 aa). Over residues 390 to 401 the composition is skewed to low complexity; the sequence is VVQHQHQQPQQP. 2 disordered regions span residues 390-481 and 515-537; these read VVQH…RGVS and AHHQRAGNASVGGGSGGAGAGAT. Basic residues predominate over residues 414–429; sequence MYHHHPHHHHHHHQHH. Over residues 441–454 the composition is skewed to gly residues; the sequence is VGVGLGGGGGGGPG. Residues 455-470 show a composition bias toward low complexity; the sequence is PSLASGGSSTTSLSRK. Over residues 524-534 the composition is skewed to gly residues; sequence SVGGGSGGAGA. Residues 553–573 form a helical membrane-spanning segment; it reads VVRMLIIFVLTFALCNLPYHA. Residues 574–595 lie on the Extracellular side of the membrane; it reads RKMWQYWSRSYRGDSNFNALLT. Residues 596–616 traverse the membrane as a helical segment; that stretch reads PLTFLVTYFNSGVNPLLYAFL. The Cytoplasmic portion of the chain corresponds to 617 to 669; it reads SRNFRKGMKELLLCSWKKGKGKSSSNSSMHHKRKALQTHSLPTDTTHIGNEQL. The interval 635–669 is disordered; sequence GKGKSSSNSSMHHKRKALQTHSLPTDTTHIGNEQL. Polar residues predominate over residues 653–669; sequence QTHSLPTDTTHIGNEQL.

This sequence belongs to the G-protein coupled receptor 1 family.

The protein resides in the cell membrane. Functionally, G-protein coupled receptor which is activated by the Trissin peptide in vitro, leading to increased intracellular calcium ion levels. The protein is Trissin receptor of Drosophila melanogaster (Fruit fly).